The following is a 707-amino-acid chain: Polyribonucleotide nucleotidyltransferase (707 aa).

D485 and D491 together coordinate Mg(2+). The KH domain occupies 552-611 (PRIYTMKIDPKKIKDVIGKGGATIRTLTEETGTSIDIDDDGTVKIAAIDGNAVKEVMARI). One can recognise an S1 motif domain in the interval 621–689 (GAVYTGKVTR…RQGRIRLTMK (69 aa)).

It belongs to the polyribonucleotide nucleotidyltransferase family. In terms of assembly, component of the RNA degradosome, which is a multiprotein complex involved in RNA processing and mRNA degradation. Requires Mg(2+) as cofactor.

The protein resides in the cytoplasm. It catalyses the reaction RNA(n+1) + phosphate = RNA(n) + a ribonucleoside 5'-diphosphate. Functionally, involved in mRNA degradation. Catalyzes the phosphorolysis of single-stranded polyribonucleotides processively in the 3'- to 5'-direction. The sequence is that of Polyribonucleotide nucleotidyltransferase from Actinobacillus succinogenes (strain ATCC 55618 / DSM 22257 / CCUG 43843 / 130Z).